A 133-amino-acid chain; its full sequence is Ribosome-binding factor A (133 aa).

This sequence belongs to the RbfA family. In terms of assembly, monomer. Binds 30S ribosomal subunits, but not 50S ribosomal subunits or 70S ribosomes.

It localises to the cytoplasm. Its function is as follows. One of several proteins that assist in the late maturation steps of the functional core of the 30S ribosomal subunit. Associates with free 30S ribosomal subunits (but not with 30S subunits that are part of 70S ribosomes or polysomes). Required for efficient processing of 16S rRNA. May interact with the 5'-terminal helix region of 16S rRNA. The polypeptide is Ribosome-binding factor A (Synechocystis sp. (strain ATCC 27184 / PCC 6803 / Kazusa)).